The sequence spans 754 residues: MTTQLRYENNDDDERVEYNLFTNRSTMMANFEEWIKMATDNKINSRNSWNFALIDYFYDLDVLKDGENNINFQKASATLDGCIKIYSSRVDSVTTETGKLLSGLAQRKTNGASNGDDSNGGNGEGLGGDSDEANIEIDPLTGMPISNDPDVNNTRRRVYNRVLETTLVEFETIKMKELDQELIIDPLFKKALVDFDEGGAKSLLLNTLNIDNTARVIFDASIKDTQNVGQGKLQRKEEELIERDSLVDDENEPSQSLISTRNDSTVNDSVISAPSMEDEILSLGMDFIKFDQIAVCEISGSIEQLRNVVEDINQAKDFIENVNNRFDNFLTEEELQAAVPDNAEDDSDGFDMGMQQELCYPDENHDNTSHDEQDDDNVNSTTGSIFEKDLMAYFDENLNRNWRGREHWKVRNFKKANLVNKESDLLEETRTTIGDTTDKNTTDDKSMDTKKKHKQKKVLEIDFFKTDDSFEDKVFASKGRTKIDMPIKNRKNDTHYLLPDDFHFSTDRITRLFIKPGQKMSLFSHRKHTRGDVSSGLFEKSTVSANHSNNDIPTIADEHFWADNYERKEQEEKEKEQSKEVGDVVGGALDNPFEDDMDGVDFNQAFEGTDDNEEASVKLDLQDDEDHKFPIRENKVTYSRVSKKVDVRRLKKNVWRSINNLIQEHDSRKNREQSSNDSETHTEDESTKELKFSDIIQGISKMYSDDTLKDISTSFCFICLLHLANEHGLQITHTENYNDLIVNYEDLATTQAAS.

Residues 104 to 149 (LAQRKTNGASNGDDSNGGNGEGLGGDSDEANIEIDPLTGMPISNDP) form a disordered region. A compositionally biased stretch (gly residues) spans 118-128 (SNGGNGEGLGG). Residue S245 is modified to Phosphoserine. The disordered stretch occupies residues 359–379 (CYPDENHDNTSHDEQDDDNVN). Positions 362-371 (DENHDNTSHD) are enriched in basic and acidic residues. S548 carries the phosphoserine modification. The segment at 665 to 688 (HDSRKNREQSSNDSETHTEDESTK) is disordered.

It belongs to the CND2 (condensin subunit 2) family. In terms of assembly, component of the condensin complex, which contains the SMC2 and SMC4 heterodimer, and three non SMC subunits that probably regulate the complex: BRN1, YCS4 and YCG1/YCS5.

The protein localises to the nucleus. Its subcellular location is the cytoplasm. It is found in the chromosome. Regulatory subunit of the condensin complex, a complex required for conversion of interphase chromatin into mitotic-like condense chromosomes. The condensin complex probably introduces positive supercoils into relaxed DNA in the presence of type I topoisomerases and converts nicked DNA into positive knotted forms in the presence of type II topoisomerases. The condensin complex probably also plays a role during interphase. In Saccharomyces cerevisiae (strain ATCC 204508 / S288c) (Baker's yeast), this protein is Condensin complex subunit 2 (BRN1).